Reading from the N-terminus, the 566-residue chain is Macrophage colony-stimulating factor 1 (566 aa).

The signal sequence occupies residues 1–32 (MTARGAAGRCPSSTWMGSRLLLVCLLVSRSVA). At 33–508 (EVSEHCSHMI…SSIQDPQTSA (476 aa)) the chain is on the extracellular side. N-linked (GlcNAc...) asparagine glycans are attached at residues N106, N153, and N171. Disordered stretches follow at residues 197–417 (PSSD…KLLP) and 434–484 (GKKS…GAAR). The span at 253–265 (PRSTCQTLESTEQ) shows a compositional bias: polar residues. S302 is a glycosylation site (O-linked (Xyl...) (chondroitin sulfate) serine). The segment covering 348–360 (DQQPTNITDTPLT) has biased composition (polar residues). The N-linked (GlcNAc...) asparagine glycan is linked to N353. 2 O-linked (GalNAc...) threonine glycosylation sites follow: T355 and T357. Basic and acidic residues predominate over residues 377–394 (EKTDGSSTLREDQQEPRS). Residues 400-410 (LNPQRVGNSAT) are compositionally biased toward polar residues. A compositionally biased stretch (basic and acidic residues) spans 434 to 445 (GKKSTRDRRSPA). A helical membrane pass occupies residues 509-531 (FVFWVLGIILVLLAVGGLLFYSW). The Cytoplasmic portion of the chain corresponds to 532–566 (KRRSHRDPRTLDSSVGRPEGSSLAQDEDRQVELPV). A disordered region spans residues 538–566 (DPRTLDSSVGRPEGSSLAQDEDRQVELPV). Residues 557–566 (DEDRQVELPV) are compositionally biased toward basic and acidic residues.

As to quaternary structure, homodimer or heterodimer; disulfide-linked. Likely to exist in multiple forms: homodimer consisting of 2 identical 150-200 kDa proteoglycan subunits, heterodimer consisting of a 150-200 kDa proteoglycan subunit and a truncated 43 kDa subunit, and a homodimer consisting of 2 identical 43 kDa subunits. Interacts with CSF1R. N-glycosylated. In terms of processing, O-glycosylated; contains chondroitin sulfate.

The protein resides in the cell membrane. Its subcellular location is the secreted. The protein localises to the extracellular space. Its function is as follows. Cytokine that plays an essential role in the regulation of survival, proliferation and differentiation of hematopoietic precursor cells, especially mononuclear phagocytes, such as macrophages and monocytes. Promotes the release of pro-inflammatory chemokines, and thereby plays an important role in innate immunity and in inflammatory processes. Plays an important role in the regulation of osteoclast proliferation and differentiation, the regulation of bone resorption, and is required for normal bone development. Required for normal male and female fertility. Promotes reorganization of the actin cytoskeleton, regulates formation of membrane ruffles, cell adhesion and cell migration. Plays a role in lipoprotein clearance. This Rattus norvegicus (Rat) protein is Macrophage colony-stimulating factor 1 (Csf1).